Consider the following 452-residue polypeptide: Bifunctional protein GlmU (452 aa).

The segment at 1–225 (MEVVILAAGQ…VSETLGVNSK (225 aa)) is pyrophosphorylase. UDP-N-acetyl-alpha-D-glucosamine contacts are provided by residues 6–9 (LAAG), Lys20, Gln71, 76–77 (GT), 98–100 (YGD), Gly135, Glu150, Asn165, and Asn223. Position 100 (Asp100) interacts with Mg(2+). Asn223 lines the Mg(2+) pocket. The tract at residues 226–246 (PQLAELERIHQRNIAQRLMED) is linker. Positions 247-452 (GVTLIDPARI…AGWKRPVKQR (206 aa)) are N-acetyltransferase. 2 residues coordinate UDP-N-acetyl-alpha-D-glucosamine: Arg329 and Lys347. His359 serves as the catalytic Proton acceptor. Tyr362 and Asn373 together coordinate UDP-N-acetyl-alpha-D-glucosamine. Acetyl-CoA-binding positions include Ala376, 382–383 (NY), Ser401, Ala419, and Arg436.

This sequence in the N-terminal section; belongs to the N-acetylglucosamine-1-phosphate uridyltransferase family. The protein in the C-terminal section; belongs to the transferase hexapeptide repeat family. As to quaternary structure, homotrimer. The cofactor is Mg(2+).

It localises to the cytoplasm. The catalysed reaction is alpha-D-glucosamine 1-phosphate + acetyl-CoA = N-acetyl-alpha-D-glucosamine 1-phosphate + CoA + H(+). It catalyses the reaction N-acetyl-alpha-D-glucosamine 1-phosphate + UTP + H(+) = UDP-N-acetyl-alpha-D-glucosamine + diphosphate. It participates in nucleotide-sugar biosynthesis; UDP-N-acetyl-alpha-D-glucosamine biosynthesis; N-acetyl-alpha-D-glucosamine 1-phosphate from alpha-D-glucosamine 6-phosphate (route II): step 2/2. It functions in the pathway nucleotide-sugar biosynthesis; UDP-N-acetyl-alpha-D-glucosamine biosynthesis; UDP-N-acetyl-alpha-D-glucosamine from N-acetyl-alpha-D-glucosamine 1-phosphate: step 1/1. The protein operates within bacterial outer membrane biogenesis; LPS lipid A biosynthesis. Its function is as follows. Catalyzes the last two sequential reactions in the de novo biosynthetic pathway for UDP-N-acetylglucosamine (UDP-GlcNAc). The C-terminal domain catalyzes the transfer of acetyl group from acetyl coenzyme A to glucosamine-1-phosphate (GlcN-1-P) to produce N-acetylglucosamine-1-phosphate (GlcNAc-1-P), which is converted into UDP-GlcNAc by the transfer of uridine 5-monophosphate (from uridine 5-triphosphate), a reaction catalyzed by the N-terminal domain. The sequence is that of Bifunctional protein GlmU from Azoarcus sp. (strain BH72).